Consider the following 404-residue polypeptide: 5-azacytidine-induced protein 2 (404 aa).

Residues Met-1–Gly-198 are homodimerization. Positions Ala-40 to Gly-198 form a coiled coil. The segment at Ser-229–Cys-269 is interaction with TBK1 and IKBKE. Ser-330 carries the phosphoserine modification. Disordered regions lie at residues Thr-332 to Tyr-351 and Leu-356 to Leu-390. At Ser-365 the chain carries Phosphoserine.

As to quaternary structure, homodimer. Interacts with IKBKE, TBK1 and TICAM1. Interacts with TAX1BP1. Interacts with CALCOCO2. Ubiquitinated via 'Lys-48'-linked polyubiquitination by TRIM38, leading to its degradation.

It is found in the cytoplasm. In terms of biological role, adapter protein which binds TBK1 and IKBKE playing a role in antiviral innate immunity. Activates serine/threonine-protein kinase TBK1 and facilitates its oligomerization. Enhances the phosphorylation of NF-kappa-B p65 subunit RELA by TBK1. Promotes TBK1-induced as well as TNF-alpha or PMA-induced activation of NF-kappa-B. Participates in IFNB promoter activation via TICAM1. In Rattus norvegicus (Rat), this protein is 5-azacytidine-induced protein 2 (Azi2).